The following is a 657-amino-acid chain: Glycogen debranching enzyme (657 aa).

Catalysis depends on Asp336, which acts as the Nucleophile. Residue Glu371 is the Proton donor of the active site. Residues 458 to 467 (NEANGEENRD) show a composition bias toward basic and acidic residues. Residues 458–479 (NEANGEENRDGTNNNYSNNHGK) are disordered.

Belongs to the glycosyl hydrolase 13 family.

The catalysed reaction is Hydrolysis of (1-&gt;6)-alpha-D-glucosidic linkages to branches with degrees of polymerization of three or four glucose residues in limit dextrin.. Its pathway is glycan degradation; glycogen degradation. Removes maltotriose and maltotetraose chains that are attached by 1,6-alpha-linkage to the limit dextrin main chain, generating a debranched limit dextrin. In Escherichia coli O8 (strain IAI1), this protein is Glycogen debranching enzyme.